The chain runs to 310 residues: Adenylyl-sulfate kinase 4, chloroplastic (310 aa).

The N-terminal 75 residues, 1–75, are a transit peptide targeting the chloroplast; the sequence is MDVAAMARCV…MAKDESISSR (75 aa). 116–124 provides a ligand contact to ATP; sequence GLSGSGKSS. Residues Asp-146, Arg-149, Arg-163, Asn-166, 189 to 190, and Gly-239 each bind substrate; that span reads IS. Catalysis depends on Ser-190, which acts as the Phosphoserine intermediate.

The protein belongs to the APS kinase family. In terms of assembly, homodimer; disulfide-linked. Expressed in root vasculature, root tips, leaf epidermal and guard cells, pollen grains and radicle of immature seeds.

The protein resides in the plastid. The protein localises to the chloroplast. The enzyme catalyses adenosine 5'-phosphosulfate + ATP = 3'-phosphoadenylyl sulfate + ADP + H(+). The protein operates within sulfur metabolism; hydrogen sulfide biosynthesis; sulfite from sulfate: step 2/3. Its function is as follows. Catalyzes the phosphorylation of adenosine 5'-phosphosulfate to 3'-phosphoadenylyl sulfate, which is the activated sulfate form for sulfation reactions. Essential for plant reproduction and viability. This chain is Adenylyl-sulfate kinase 4, chloroplastic (APK4), found in Arabidopsis thaliana (Mouse-ear cress).